The primary structure comprises 982 residues: Serine/threonine-protein kinase ATG1 (982 aa).

Positions 19–324 (FVIGAEIGKG…FENFFAHPVI (306 aa)) constitute a Protein kinase domain. ATP is bound by residues 25 to 33 (IGKGSFAQV) and K48. The active-site Proton acceptor is the D162. 4 disordered regions span residues 334 to 506 (DDIP…REKA), 813 to 834 (RLPD…SVNG), 898 to 918 (PKRR…DGHA), and 947 to 982 (RMIS…SYSS). Composition is skewed to basic and acidic residues over residues 335–359 (DIPK…KSDD) and 372–387 (HPTD…RRVE). Over residues 388-398 (PPSSAAESAPS) the composition is skewed to low complexity. Over residues 463-481 (SNASLNRSNRESSSPTSAA) the composition is skewed to polar residues.

This sequence belongs to the protein kinase superfamily. Ser/Thr protein kinase family. APG1/unc-51/ULK1 subfamily. Homodimer. Forms a ternary complex with ATG13 and ATG17. In terms of tissue distribution, uniformly detected in conidia, mycelia and appressoria (at protein level).

It localises to the cytoplasm. Its subcellular location is the preautophagosomal structure membrane. It carries out the reaction L-seryl-[protein] + ATP = O-phospho-L-seryl-[protein] + ADP + H(+). The catalysed reaction is L-threonyl-[protein] + ATP = O-phospho-L-threonyl-[protein] + ADP + H(+). In terms of biological role, serine/threonine protein kinase involved in the cytoplasm to vacuole transport (Cvt) and found to be essential in autophagy, where it is required for the formation of autophagosomes. Involved in the clearance of protein aggregates which cannot be efficiently cleared by the proteasome. Required for selective autophagic degradation of the nucleus (nucleophagy) as well as for mitophagy which contributes to regulate mitochondrial quantity and quality by eliminating the mitochondria to a basal level to fulfill cellular energy requirements and preventing excess ROS production. Also involved in endoplasmic reticulum-specific autophagic process, in selective removal of ER-associated degradation (ERAD) substrates. Plays a key role in ATG9 and ATG23 cycling through the pre-autophagosomal structure and is necessary to promote ATG18 binding to ATG9 through phosphorylation of ATG9. Catalyzes phosphorylation of ATG4, decreasing the interaction between ATG4 and ATG8 and impairing deconjugation of PE-conjugated forms of ATG8. Autophagy is essential to fungal development, production of appressorium turgor, and pathogenicity in rice blast disease. The polypeptide is Serine/threonine-protein kinase ATG1 (Pyricularia oryzae (strain 70-15 / ATCC MYA-4617 / FGSC 8958) (Rice blast fungus)).